A 348-amino-acid polypeptide reads, in one-letter code: Holliday junction branch migration complex subunit RuvB (348 aa).

The large ATPase domain (RuvB-L) stretch occupies residues 3–183 (DDGLVSAAAS…FGFTAHLDFY (181 aa)). ATP contacts are provided by residues Leu-22, Arg-23, Gly-64, Lys-67, Thr-68, Ser-69, 130–132 (EDF), Arg-173, Tyr-183, and Arg-220. Mg(2+) is bound at residue Thr-68. The segment at 184–254 (DADELARVLT…IAQAALRIYD (71 aa)) is small ATPAse domain (RuvB-S). The segment at 257–348 (GLGLDRLDRA…TQVSLFTEGE (92 aa)) is head domain (RuvB-H). 2 residues coordinate DNA: Arg-312 and Arg-317.

Belongs to the RuvB family. In terms of assembly, homohexamer. Forms an RuvA(8)-RuvB(12)-Holliday junction (HJ) complex. HJ DNA is sandwiched between 2 RuvA tetramers; dsDNA enters through RuvA and exits via RuvB. An RuvB hexamer assembles on each DNA strand where it exits the tetramer. Each RuvB hexamer is contacted by two RuvA subunits (via domain III) on 2 adjacent RuvB subunits; this complex drives branch migration. In the full resolvosome a probable DNA-RuvA(4)-RuvB(12)-RuvC(2) complex forms which resolves the HJ.

The protein localises to the cytoplasm. It catalyses the reaction ATP + H2O = ADP + phosphate + H(+). Its function is as follows. The RuvA-RuvB-RuvC complex processes Holliday junction (HJ) DNA during genetic recombination and DNA repair, while the RuvA-RuvB complex plays an important role in the rescue of blocked DNA replication forks via replication fork reversal (RFR). RuvA specifically binds to HJ cruciform DNA, conferring on it an open structure. The RuvB hexamer acts as an ATP-dependent pump, pulling dsDNA into and through the RuvAB complex. RuvB forms 2 homohexamers on either side of HJ DNA bound by 1 or 2 RuvA tetramers; 4 subunits per hexamer contact DNA at a time. Coordinated motions by a converter formed by DNA-disengaged RuvB subunits stimulates ATP hydrolysis and nucleotide exchange. Immobilization of the converter enables RuvB to convert the ATP-contained energy into a lever motion, pulling 2 nucleotides of DNA out of the RuvA tetramer per ATP hydrolyzed, thus driving DNA branch migration. The RuvB motors rotate together with the DNA substrate, which together with the progressing nucleotide cycle form the mechanistic basis for DNA recombination by continuous HJ branch migration. Branch migration allows RuvC to scan DNA until it finds its consensus sequence, where it cleaves and resolves cruciform DNA. The sequence is that of Holliday junction branch migration complex subunit RuvB from Frankia casuarinae (strain DSM 45818 / CECT 9043 / HFP020203 / CcI3).